A 70-amino-acid polypeptide reads, in one-letter code: V-type proton ATPase subunit e1 (70 aa).

A run of 2 helical transmembrane segments spans residues 1-21 (MGFL…SLCV) and 36-56 (LTLV…VYIA).

It belongs to the V-ATPase e1/e2 subunit family. As to quaternary structure, V-ATPase is a heteromultimeric enzyme composed of a peripheral catalytic V1 complex (components A to H) attached to an integral membrane V0 proton pore complex (components: a, c, c'', d and e).

Its subcellular location is the golgi apparatus. It localises to the trans-Golgi network membrane. Functionally, subunit of the integral membrane V0 complex of vacuolar ATPase. V-ATPase is responsible for acidifying a variety of intracellular compartments in eukaryotic cells. The sequence is that of V-type proton ATPase subunit e1 (VHA-e1) from Arabidopsis thaliana (Mouse-ear cress).